Consider the following 208-residue polypeptide: Protein Nef (208 aa).

A lipid anchor (N-myristoyl glycine; by host) is attached at Gly2. Ser6 carries the post-translational modification Phosphoserine; by host. The segment at 64–67 (EEEE) is acidic; interacts with host PACS1 and PACS2; stabilizes the interaction of NEF/MHC-I with host AP1M1; necessary for MHC-I internalization. The tract at residues 71 to 80 (PVKPQVPLRP) is SH3-binding; interaction with Src family tyrosine kinases. Residues 74 to 77 (PQVP) carry the PxxP; stabilizes the interaction of NEF/MHC-I with host AP1M1; necessary for MHC-I internalization motif. The segment at 110 to 126 (DILDLWVYHTQGYFPDW) is mediates dimerization, Nef-PTE1 interaction. The interval 150–182 (VEPEKIEEANKGENNCLLHPMSQHGMDDPEREV) is binding to ATP6V1H. The Dileucine internalization motif; necessary for CD4 internalization signature appears at 166-167 (LL). A Diacidic; necessary for CD4 internalization motif is present at residues 176 to 177 (DD).

Belongs to the lentivirus primate group Nef protein family. Monomer; cytosolic form. Homodimer; membrane bound form. Interacts with Nef associated p21-activated kinase (PAK2); this interaction activates PAK2. Associates with the Nef-MHC-I-AP1 complex; this complex is required for MHC-I internalization. Interacts (via C-terminus) with host PI3-kinase. Interacts with host PACS1; this interaction seems to be weak. Interacts with host PACS2. Interacts with host LCK and MAPK3; these interactions inhibit the kinase activity of the latter. Interacts with host ATP6V1H; this interaction may play a role in CD4 endocytosis. Associates with the CD4-Nef-AP2 complex; this complex is required for CD4 internalization. Interacts with host AP2 subunit alpha and AP2 subunit sigma2. Interacts with TCR-zeta chain; this interaction up-regulates the Fas ligand (FasL) surface expression. Interacts with host HCK, LYN, and SRC; these interactions activate the Src family kinases. Interacts with MAP3K5; this interaction inhibits the Fas and TNFR-mediated death signals. Interacts with beta-COP and PTE1. Interacts with human RACK1; this increases Nef phosphorylation by PKC. Interacts with TP53; this interaction decreases the half-life of TP53, protecting the infected cell against p53-mediated apoptosis. In terms of processing, the virion-associated Nef proteins are cleaved by the viral protease to release the soluble C-terminal core protein. Nef is probably cleaved concomitantly with viral structural proteins on maturation of virus particles. Myristoylated. Post-translationally, phosphorylated on serine residues, probably by host PKCdelta and theta.

The protein localises to the host cell membrane. It localises to the virion. The protein resides in the secreted. It is found in the host Golgi apparatus membrane. Its function is as follows. Factor of infectivity and pathogenicity, required for optimal virus replication. Alters numerous pathways of T-lymphocyte function and down-regulates immunity surface molecules in order to evade host defense and increase viral infectivity. Alters the functionality of other immunity cells, like dendritic cells, monocytes/macrophages and NK cells. In infected CD4(+) T-lymphocytes, down-regulates the surface MHC-I, mature MHC-II, CD4, CD28, CCR5 and CXCR4 molecules. Mediates internalization and degradation of host CD4 through the interaction of with the cytoplasmic tail of CD4, the recruitment of AP-2 (clathrin adapter protein complex 2), internalization through clathrin coated pits, and subsequent transport to endosomes and lysosomes for degradation. Diverts host MHC-I molecules to the trans-Golgi network-associated endosomal compartments by an endocytic pathway to finally target them for degradation. MHC-I down-regulation may involve AP-1 (clathrin adapter protein complex 1) or possibly Src family kinase-ZAP70/Syk-PI3K cascade recruited by PACS2. In consequence infected cells are masked for immune recognition by cytotoxic T-lymphocytes. Decreasing the number of immune receptors also prevents reinfection by more HIV particles (superinfection). Down-regulates host SERINC3 and SERINC5 thereby excluding these proteins from the viral particles. Virion infectivity is drastically higher when SERINC3 or SERINC5 are excluded from the viral envelope, because these host antiviral proteins impair the membrane fusion event necessary for subsequent virion penetration. In terms of biological role, bypasses host T-cell signaling by inducing a transcriptional program nearly identical to that of anti-CD3 cell activation. Interaction with TCR-zeta chain up-regulates the Fas ligand (FasL). Increasing surface FasL molecules and decreasing surface MHC-I molecules on infected CD4(+) cells send attacking cytotoxic CD8+ T-lymphocytes into apoptosis. Functionally, plays a role in optimizing the host cell environment for viral replication without causing cell death by apoptosis. Protects the infected cells from apoptosis in order to keep them alive until the next virus generation is ready to strike. Inhibits the Fas and TNFR-mediated death signals by blocking MAP3K5/ASK1. Decreases the half-life of TP53, protecting the infected cell against p53-mediated apoptosis. Inhibits the apoptotic signals regulated by the Bcl-2 family proteins through the formation of a Nef/PI3-kinase/PAK2 complex that leads to activation of PAK2 and induces phosphorylation of host BAD. Its function is as follows. Extracellular Nef protein targets CD4(+) T-lymphocytes for apoptosis by interacting with CXCR4 surface receptors. The protein is Protein Nef of Human immunodeficiency virus type 1 group M subtype B (isolate MN) (HIV-1).